The following is a 231-amino-acid chain: Acyl-protein thioesterase 2 (231 aa).

Residue Cys-2 is the site of S-palmitoyl cysteine attachment. Ser-82 is modified (phosphoserine). Active-site charge relay system residues include Ser-122, Asp-176, and His-210.

The protein belongs to the AB hydrolase superfamily. AB hydrolase 2 family. As to expression, expressed in various breast cancer cell lines.

Its subcellular location is the cytoplasm. The catalysed reaction is S-hexadecanoyl-L-cysteinyl-[protein] + H2O = L-cysteinyl-[protein] + hexadecanoate + H(+). The enzyme catalyses prostaglandin E2 1-glyceryl ester + H2O = prostaglandin E2 + glycerol + H(+). It catalyses the reaction 1-hexadecanoyl-sn-glycero-3-phosphocholine + H2O = sn-glycerol 3-phosphocholine + hexadecanoate + H(+). It carries out the reaction 1-octadecanoyl-sn-glycero-3-phosphocholine + H2O = octadecanoate + sn-glycerol 3-phosphocholine + H(+). The catalysed reaction is 1-hexadecanoyl-sn-glycero-3-phosphate + H2O = sn-glycerol 3-phosphate + hexadecanoate + H(+). The enzyme catalyses 1-hexadecanoyl-sn-glycero-3-phospho-L-serine + H2O = sn-glycero-3-phospho-L-serine + hexadecanoate + H(+). With respect to regulation, inhibited by compound 1 or (5,5-Dioxido-4H-thieno[3,2-c]thiochromen-2-yl)(4-(4-methoxyphenyl)piperazin-1-yl)methanone. In terms of biological role, acts as an acyl-protein thioesterase hydrolyzing fatty acids from S-acylated cysteine residues in proteins such as trimeric G alpha proteins, GSDMD, GAP43, ZDHHC6 or HRAS. Deacylates GAP43. Mediates depalmitoylation of ZDHHC6. Has lysophospholipase activity. Hydrolyzes prostaglandin glycerol esters (PG-Gs) in the following order prostaglandin D2-glycerol ester (PGD2-G) &gt; prostaglandin E2 glycerol ester (PGE2-G) &gt; prostaglandin F2-alpha-glycerol ester (PGF2-alpha-G). Hydrolyzes 1-arachidonoylglycerol but not 2-arachidonoylglycerol or arachidonoylethanolamide. The sequence is that of Acyl-protein thioesterase 2 (LYPLA2) from Homo sapiens (Human).